The sequence spans 245 residues: Glycerophosphodiester phosphodiesterase (245 aa).

In terms of domain architecture, GP-PDE spans 2 to 241 (TKIFAHRGFK…DFPDRAVKIR (240 aa)). The active-site Proton acceptor is histidine 7. The a divalent metal cation site is built by glutamate 34 and aspartate 36. Histidine 49 (proton donor) is an active-site residue. Glutamate 110 is a binding site for a divalent metal cation.

This sequence belongs to the glycerophosphoryl diester phosphodiesterase family. Ni(2+) is required as a cofactor. It depends on Co(2+) as a cofactor. Mn(2+) serves as cofactor.

The catalysed reaction is a sn-glycero-3-phosphodiester + H2O = an alcohol + sn-glycerol 3-phosphate + H(+). With respect to regulation, inhibited by EDTA and various organic solvents such as chloroform, toluene or benzene. In terms of biological role, glycerophosphodiester phosphodiesterase hydrolyzes glycerophosphodiesters into glycerol-3-phosphate (G3P) and the corresponding alcohol. Can hydrolyze the model substrate bis-(p-nitrophenyl phosphate) (bis(pNPP)) to p-nitrophenol. Can also catalyze the degradation of diphenyl phosphate (DPHP) to phenyl phosphate (PHP). DPHP is an aryl phosphate ester used as a chemical additive and an industrial catalyst that can easily spread to the environment and exhibits toxicity toward organisms. The polypeptide is Glycerophosphodiester phosphodiesterase (Bacillus altitudinis).